Consider the following 258-residue polypeptide: Spindlin-2 (258 aa).

A disordered region spans residues 1–47 (MKTPHKKATARQQTREIVDDHTLSASMRKKKISQKKQRGRPSSQTRR). Positions 13–22 (QTREIVDDHT) are enriched in basic and acidic residues. Basic residues predominate over residues 27–39 (MRKKKISQKKQRG). Tudor-like domain stretches follow at residues 50 to 99 (VGCR…LELH), 129 to 178 (IGKA…YQLL), and 210 to 255 (IGKH…YDLV). Histone H3K4me3 and H3R8me2a binding stretches follow at residues Glu-138 and 246–248 (DFH).

It belongs to the SPIN/STSY family. In terms of assembly, interacts with C11orf84/SPINDOC.

It is found in the nucleus. Functionally, may be involved in the regulation of cell cycle progression. Exhibits H3K4me3-binding activity. The sequence is that of Spindlin-2 (SPIN2) from Bos taurus (Bovine).